Here is a 788-residue protein sequence, read N- to C-terminus: Histidine--tRNA ligase, cytoplasmic (788 aa).

The disordered stretch occupies residues 252-286 (PQACEENEAGSSTENPHASGEKPKGDKKSKKKKTL).

It belongs to the class-II aminoacyl-tRNA synthetase family. As to quaternary structure, homodimer.

The catalysed reaction is tRNA(His) + L-histidine + ATP = L-histidyl-tRNA(His) + AMP + diphosphate + H(+). This is Histidine--tRNA ligase, cytoplasmic from Oryza sativa subsp. japonica (Rice).